Consider the following 305-residue polypeptide: Acetaldehyde dehydrogenase (305 aa).

Residue S13–I16 coordinates NAD(+). C128 serves as the catalytic Acyl-thioester intermediate. NAD(+) is bound by residues S159–N167 and N278.

The protein belongs to the acetaldehyde dehydrogenase family.

The enzyme catalyses acetaldehyde + NAD(+) + CoA = acetyl-CoA + NADH + H(+). This Roseiflexus castenholzii (strain DSM 13941 / HLO8) protein is Acetaldehyde dehydrogenase.